Here is a 429-residue protein sequence, read N- to C-terminus: Adenylosuccinate synthetase (429 aa).

GTP-binding positions include 12–18 and 40–42; these read GDEGKGK and GHT. D13 functions as the Proton acceptor in the catalytic mechanism. Mg(2+) is bound by residues D13 and G40. IMP-binding positions include 13 to 16, 38 to 41, T128, R142, Q223, T238, and R302; these read DEGK and NAGH. H41 acts as the Proton donor in catalysis. 298-304 lines the substrate pocket; the sequence is VNTGRPR. GTP-binding positions include R304, 330 to 332, and 412 to 414; these read KLD and GVG.

Belongs to the adenylosuccinate synthetase family. As to quaternary structure, homodimer. Mg(2+) serves as cofactor.

It is found in the cytoplasm. The catalysed reaction is IMP + L-aspartate + GTP = N(6)-(1,2-dicarboxyethyl)-AMP + GDP + phosphate + 2 H(+). It functions in the pathway purine metabolism; AMP biosynthesis via de novo pathway; AMP from IMP: step 1/2. Plays an important role in the de novo pathway of purine nucleotide biosynthesis. Catalyzes the first committed step in the biosynthesis of AMP from IMP. The polypeptide is Adenylosuccinate synthetase (Renibacterium salmoninarum (strain ATCC 33209 / DSM 20767 / JCM 11484 / NBRC 15589 / NCIMB 2235)).